Consider the following 279-residue polypeptide: MAWFKRVKPSIRPTDKRDMPEGLWWKCEECGAMLHKKQFEDHFFTCAECGHHFRISPYKYFSILFDDDKYVEFDDHLRSADPLGFVDTKKYPDRVHDTIEKSGKTEACRNAHGESGGRPLVVSAMDFGFIGGSMGSVVGEKIARAVDKSLELDAPLLVISQSGGARMMEGAFSLMQMAKTAARLTRLSERKLPFVSLMTDPTMGGISASFAMLGDINISEPKALIGFAGPRVIRDTIKRDLPEGFQRAEFLLEQGFLDRVIHRRDLKNELVTLFSMLKV.

The CoA carboxyltransferase N-terminal domain occupies 23 to 279 (LWWKCEECGA…LVTLFSMLKV (257 aa)). Zn(2+) is bound by residues Cys27, Cys30, Cys46, and Cys49. The C4-type zinc finger occupies 27–49 (CEECGAMLHKKQFEDHFFTCAEC).

The protein belongs to the AccD/PCCB family. In terms of assembly, acetyl-CoA carboxylase is a heterohexamer composed of biotin carboxyl carrier protein (AccB), biotin carboxylase (AccC) and two subunits each of ACCase subunit alpha (AccA) and ACCase subunit beta (AccD). Zn(2+) serves as cofactor.

The protein resides in the cytoplasm. The enzyme catalyses N(6)-carboxybiotinyl-L-lysyl-[protein] + acetyl-CoA = N(6)-biotinyl-L-lysyl-[protein] + malonyl-CoA. Its pathway is lipid metabolism; malonyl-CoA biosynthesis; malonyl-CoA from acetyl-CoA: step 1/1. In terms of biological role, component of the acetyl coenzyme A carboxylase (ACC) complex. Biotin carboxylase (BC) catalyzes the carboxylation of biotin on its carrier protein (BCCP) and then the CO(2) group is transferred by the transcarboxylase to acetyl-CoA to form malonyl-CoA. The chain is Acetyl-coenzyme A carboxylase carboxyl transferase subunit beta from Pelodictyon phaeoclathratiforme (strain DSM 5477 / BU-1).